We begin with the raw amino-acid sequence, 335 residues long: Transcription factor IIIA (335 aa).

C2H2-type zinc fingers lie at residues 13-37 (YICS…LCKH), 43-67 (FPCT…SMTH), 73-98 (CKCD…QRAH), 105-129 (YECY…QYIH), 135-159 (FKCN…EKVH), 162-188 (YPCQ…AASH), 192-214 (TICD…KRTH), 221-246 (YKCP…LSFH), and 252-276 (FACG…ANTH). Residues 269–280 (LDRHANTHDPEK) show a composition bias toward basic and acidic residues. Positions 269–335 (LDRHANTHDP…ATAMQNLSIK (67 aa)) are disordered. The segment covering 281–292 (KKMKKPRPKKSL) has biased composition (basic residues).

It localises to the nucleus. In terms of biological role, involved in ribosomal large subunit biogenesis. Interacts with the internal control region (ICR) of approximately 50 bases within the 5S RNA genes, is required for correct transcription of these genes by RNA polymerase III. Also binds the transcribed 5S RNA's. The sequence is that of Transcription factor IIIA (gtf3a) from Lithobates pipiens (Northern leopard frog).